We begin with the raw amino-acid sequence, 161 residues long: Phosphopantetheine adenylyltransferase (161 aa).

Serine 9 serves as a coordination point for substrate. Residues 9 to 10 (SF) and histidine 17 contribute to the ATP site. Residues lysine 41, threonine 73, and arginine 87 each contribute to the substrate site. Residues 88–90 (GLR), glutamate 98, and 123–129 (FAHISST) each bind ATP.

Belongs to the bacterial CoaD family. Homohexamer. Mg(2+) serves as cofactor.

It localises to the cytoplasm. It catalyses the reaction (R)-4'-phosphopantetheine + ATP + H(+) = 3'-dephospho-CoA + diphosphate. Its pathway is cofactor biosynthesis; coenzyme A biosynthesis; CoA from (R)-pantothenate: step 4/5. In terms of biological role, reversibly transfers an adenylyl group from ATP to 4'-phosphopantetheine, yielding dephospho-CoA (dPCoA) and pyrophosphate. The chain is Phosphopantetheine adenylyltransferase from Chloroflexus aurantiacus (strain ATCC 29366 / DSM 635 / J-10-fl).